A 206-amino-acid chain; its full sequence is Large ribosomal subunit protein uL4 (206 aa).

This sequence belongs to the universal ribosomal protein uL4 family. Part of the 50S ribosomal subunit.

Its function is as follows. One of the primary rRNA binding proteins, this protein initially binds near the 5'-end of the 23S rRNA. It is important during the early stages of 50S assembly. It makes multiple contacts with different domains of the 23S rRNA in the assembled 50S subunit and ribosome. Functionally, forms part of the polypeptide exit tunnel. The protein is Large ribosomal subunit protein uL4 of Jannaschia sp. (strain CCS1).